The following is a 643-amino-acid chain: Transducer protein Htr8 (643 aa).

5 helical membrane passes run 48-68 (VFVL…GTES), 79-99 (PGIL…LASI), 115-134 (VLAS…EAHF), 149-169 (WLPF…FGMI), and 184-204 (PWVW…ALMA). The region spanning 273–326 (ERLEATANTYGAAMARAADGDLSVRLDPDVENDAMAAIAASFNEMLDETETTIR) is the HAMP domain. A Methyl-accepting transducer domain is found at 345 to 581 (GVVEIEDASG…EAVSMIAEVS (237 aa)).

The protein belongs to the methyl-accepting chemotaxis (MCP) protein family. In terms of processing, methylated by CheR.

The protein localises to the cell membrane. Functionally, potentially involved in chemo- or phototactic signal transduction. The polypeptide is Transducer protein Htr8 (htr8) (Halobacterium salinarum (strain ATCC 29341 / DSM 671 / R1)).